We begin with the raw amino-acid sequence, 367 residues long: Peptide chain release factor 2 (367 aa).

An N5-methylglutamine modification is found at glutamine 254.

This sequence belongs to the prokaryotic/mitochondrial release factor family. Post-translationally, methylated by PrmC. Methylation increases the termination efficiency of RF2.

The protein localises to the cytoplasm. Functionally, peptide chain release factor 2 directs the termination of translation in response to the peptide chain termination codons UGA and UAA. The polypeptide is Peptide chain release factor 2 (Bordetella bronchiseptica (strain ATCC BAA-588 / NCTC 13252 / RB50) (Alcaligenes bronchisepticus)).